A 156-amino-acid polypeptide reads, in one-letter code: MASISATLPSPLLLTQRKSNLTSIQKLPFSLTRGTNDLSPLSLTRNPSSISLMVKASGESSDSSTDLDVVSTIQNVWDKSEDRLGLIGLGFAGIVALWASLNLITAIDKLPVISSGFELVGILFSTWFTYRYLLFKPDRQELSKIVKKSVADILGQ.

Residues 1-55 constitute a chloroplast transit peptide; the sequence is MASISATLPSPLLLTQRKSNLTSIQKLPFSLTRGTNDLSPLSLTRNPSSISLMVK. Topologically, residues 56-83 are stromal; that stretch reads ASGESSDSSTDLDVVSTIQNVWDKSEDR. Residues 84–104 traverse the membrane as a helical segment; that stretch reads LGLIGLGFAGIVALWASLNLI. At 105–109 the chain is on the lumenal side; the sequence is TAIDK. Residues 110-130 form a helical membrane-spanning segment; it reads LPVISSGFELVGILFSTWFTY. Residues 131-156 are Stromal-facing; the sequence is RYLLFKPDRQELSKIVKKSVADILGQ.

The protein belongs to the CURT family. As to quaternary structure, homo- and heterodimers and trimers. Interacts with PSAD2.

The protein resides in the plastid. It localises to the chloroplast thylakoid membrane. In terms of biological role, determines thylakoid architecture by inducing membrane curvature. The protein is Protein CURVATURE THYLAKOID 1C, chloroplastic (CURT1C) of Arabidopsis thaliana (Mouse-ear cress).